The chain runs to 2178 residues: Toxin A (2178 aa).

Residues 1-93 are four-helical bundle; the sequence is MLITREQLMK…RELIKNSRTS (93 aa). Residues 98 to 474 enclose the GT44 domain; that stretch reads KNLSFIWIGG…KPEVNSTVFF (377 aa). Residues 98–474 are glucosyltransferase region; the sequence is KNLSFIWIGG…KPEVNSTVFF (377 aa). The interval 98–474 is N-acetylglucosaminyltransferase region; the sequence is KNLSFIWIGG…KPEVNSTVFF (377 aa). UDP-N-acetyl-alpha-D-glucosamine contacts are provided by residues 103–105, asparagine 141, 267–271, and 284–286; these read IWI, SDILR, and DLD. Mg(2+) is bound by residues aspartate 284, aspartate 286, and glutamate 520. 523-525 serves as a coordination point for UDP-N-acetyl-alpha-D-glucosamine; sequence SSW. An autoprocessing region region spans residues 549-806; that stretch reads NYEDGLNFNK…RVEQLNKVAE (258 aa). 3 residues coordinate 1D-myo-inositol hexakisphosphate: asparagine 557, lysine 607, and lysine 651. In terms of domain architecture, Peptidase C80 spans 574–787; sequence VNSTKIYENY…QISNKYVVYW (214 aa). The active-site For protease activity is the histidine 657. The Nucleophile; for protease activity role is filled by cysteine 707. 1D-myo-inositol hexakisphosphate is bound by residues 758–759 and lysine 782; that span reads KR. The interval 807-1485 is translocation region; sequence FAKDINSIIQ…VYMEGKIFLN (679 aa). Cell wall-binding repeat units follow at residues 1799-1818, 1820-1839, 1870-1889, 1890-1909, 1910-1929, 1931-1950, 1951-1970, 2004-2023, 2024-2043, 2045-2060, 2064-2083, 2114-2133, 2134-2153, and 2155-2174; these read EYGW…INLI, KKGY…NTGV, YTGW…NSKA, VTGL…NGQM, QIKW…NTGE, IIGW…EGRL, LTGY…NING, YKGW…DSIA, VTGS…KTAV, TNGW…YVSN, VLGY…STGI, YTGW…YNSA, VTGW…KTGA, and TTGL…KGEQ.

It belongs to the clostridial glucosylating toxin (LCGT) family. The cofactor is Mn(2+). Requires Mg(2+) as cofactor. Post-translationally, undergoes autocatalytic cleavage to release the N-terminal part (N-acetylglucosaminyltransferase TcdA), which constitutes the active part of the toxin, in the host cytosol. 1D-myo-inositol hexakisphosphate-binding (InsP6) activates the peptidase C80 domain and promotes autoprocessing.

It is found in the secreted. The protein resides in the host endosome membrane. It localises to the host cytoplasm. The protein localises to the host cytosol. Its subcellular location is the host cell membrane. It catalyses the reaction L-threonyl-[protein] + UDP-N-acetyl-alpha-D-glucosamine = 3-O-(N-acetyl-alpha-D-glucosaminyl)-L-threonyl-[protein] + UDP + H(+). With respect to regulation, protease activity is activated upon binding to 1D-myo-inositol hexakisphosphate (InsP6), which induces conformational reorganization. Precursor of a cytotoxin, which enters into host cells and mediates autoprocessing to release the active toxin (N-acetylglucosaminyltransferase TcdA) into the host cytosol. Once entered into host cells, acidification in the endosome promotes the membrane insertion of the translocation region and formation of a pore, leading to translocation of the GT44 and peptidase C80 domains across the endosomal membrane. This activates the peptidase C80 domain and autocatalytic processing, releasing the N-terminal part (N-acetylglucosaminyltransferase TcdA), which constitutes the active part of the toxin, in the cytosol. In terms of biological role, active form of the toxin, which is released into the host cytosol following autoprocessing and inactivates small GTPases. Acts by mediating monoglycosylation of small GTPases of the Rho family (Rac1, RhoA, RhoG and Cdc42) in host cells at the conserved threonine residue located in the switch I region ('Thr-37/35'), using UDP-N-acetyl-alpha-D-glucosamine as the sugar donor. Monoglycosylation of host small GTPases completely prevents the recognition of the downstream effector, blocking the GTPases in their inactive form, leading to actin cytoskeleton disruption and cell death. The protein is Toxin A (tcdA) of Clostridium novyi.